Reading from the N-terminus, the 312-residue chain is Formimidoylglutamase (312 aa).

Residues His128, Asp153, His155, Asp157, Asp240, and Asp242 each contribute to the Mn(2+) site.

Belongs to the arginase family. It depends on Mn(2+) as a cofactor.

The catalysed reaction is N-formimidoyl-L-glutamate + H2O = formamide + L-glutamate. It participates in amino-acid degradation; L-histidine degradation into L-glutamate; L-glutamate from N-formimidoyl-L-glutamate (hydrolase route): step 1/1. Functionally, catalyzes the conversion of N-formimidoyl-L-glutamate to L-glutamate and formamide. This chain is Formimidoylglutamase, found in Enterobacter sp. (strain 638).